The chain runs to 447 residues: Cobyrinate a,c-diamide synthase (447 aa).

Positions 247–435 (RIGVAIDEAF…IHIHAASCPQ (189 aa)) constitute a GATase cobBQ-type domain. Catalysis depends on Cys329, which acts as the Nucleophile.

Belongs to the CobB/CbiA family. The cofactor is Mg(2+).

It carries out the reaction cob(II)yrinate + 2 L-glutamine + 2 ATP + 2 H2O = cob(II)yrinate a,c diamide + 2 L-glutamate + 2 ADP + 2 phosphate + 2 H(+). The enzyme catalyses Ni-sirohydrochlorin + 2 L-glutamine + 2 ATP + 2 H2O = Ni-sirohydrochlorin a,c-diamide + 2 L-glutamate + 2 ADP + 2 phosphate + 2 H(+). The protein operates within cofactor biosynthesis; adenosylcobalamin biosynthesis; cob(II)yrinate a,c-diamide from sirohydrochlorin (anaerobic route): step 10/10. Catalyzes the ATP-dependent amidation of the two carboxylate groups at positions a and c of cobyrinate, using either L-glutamine or ammonia as the nitrogen source. Involved in the biosynthesis of the unique nickel-containing tetrapyrrole coenzyme F430, the prosthetic group of methyl-coenzyme M reductase (MCR), which plays a key role in methanogenesis and anaerobic methane oxidation. Catalyzes the ATP-dependent amidation of the two carboxylate groups at positions a and c of Ni-sirohydrochlorin, using L-glutamine or ammonia as the nitrogen source. This chain is Cobyrinate a,c-diamide synthase, found in Methanothermobacter thermautotrophicus (strain ATCC 29096 / DSM 1053 / JCM 10044 / NBRC 100330 / Delta H) (Methanobacterium thermoautotrophicum).